The following is a 244-amino-acid chain: DNA polymerase sliding clamp (244 aa).

This sequence belongs to the PCNA family. Homotrimer. The subunits circularize to form a toroid; DNA passes through its center. Replication factor C (RFC) is required to load the toroid on the DNA.

Its function is as follows. Sliding clamp subunit that acts as a moving platform for DNA processing. Responsible for tethering the catalytic subunit of DNA polymerase and other proteins to DNA during high-speed replication. This Methanothrix thermoacetophila (strain DSM 6194 / JCM 14653 / NBRC 101360 / PT) (Methanosaeta thermophila) protein is DNA polymerase sliding clamp.